Consider the following 966-residue polypeptide: RNA polymerase-associated protein RapA (966 aa).

The 175-residue stretch at 163-337 (EVGRRIAPRV…FARLHLLDPN (175 aa)) folds into the Helicase ATP-binding domain. Residue 176–183 (DEVGLGKT) coordinates ATP. The DEAH box signature appears at 283 to 286 (DEAH). In terms of domain architecture, Helicase C-terminal spans 489-643 (RVDWLINLVK…TCPMGAILHE (155 aa)).

It belongs to the SNF2/RAD54 helicase family. RapA subfamily. As to quaternary structure, interacts with the RNAP. Has a higher affinity for the core RNAP than for the holoenzyme. Its ATPase activity is stimulated by binding to RNAP.

Functionally, transcription regulator that activates transcription by stimulating RNA polymerase (RNAP) recycling in case of stress conditions such as supercoiled DNA or high salt concentrations. Probably acts by releasing the RNAP, when it is trapped or immobilized on tightly supercoiled DNA. Does not activate transcription on linear DNA. Probably not involved in DNA repair. The polypeptide is RNA polymerase-associated protein RapA (Histophilus somni (strain 129Pt) (Haemophilus somnus)).